The primary structure comprises 68 residues: Large ribosomal subunit protein bL35 (68 aa).

Belongs to the bacterial ribosomal protein bL35 family.

The sequence is that of Large ribosomal subunit protein bL35 from Wolbachia pipientis subsp. Culex pipiens (strain wPip).